A 544-amino-acid chain; its full sequence is Chaperonin GroEL (544 aa).

Residues Thr29 to Pro32, Asp86 to Thr90, Gly413, Asn476 to Ala478, and Asp492 contribute to the ATP site.

Belongs to the chaperonin (HSP60) family. Forms a cylinder of 14 subunits composed of two heptameric rings stacked back-to-back. Interacts with the co-chaperonin GroES.

Its subcellular location is the cytoplasm. It carries out the reaction ATP + H2O + a folded polypeptide = ADP + phosphate + an unfolded polypeptide.. Its function is as follows. Together with its co-chaperonin GroES, plays an essential role in assisting protein folding. The GroEL-GroES system forms a nano-cage that allows encapsulation of the non-native substrate proteins and provides a physical environment optimized to promote and accelerate protein folding. The sequence is that of Chaperonin GroEL from Bacillus velezensis (strain DSM 23117 / BGSC 10A6 / LMG 26770 / FZB42) (Bacillus amyloliquefaciens subsp. plantarum).